A 367-amino-acid chain; its full sequence is MISFETKTKIEELEKKYKDVLSVVNEDEINKELEEVEKKLTDPSVWDDQKKAREYTQKLKRLKNISEDLKRVRSLFEDLEVAIELSDEDQEMAQHVEEIVQELEGAVKKLELEIILNGKYDPNNAYLSVHPGAGGTESQDWAQMLLRMYMRWAERKGFDVEIVEFQPGEEAGIKDATILIKGEYAYGYLKHESGVHRLVRISPFDAARRRHTSFASVNVIPEIDDDVDIEIRPEDLKIETFRASGHGGQYVNKTESAVRITHLPTGIVVSCQNERSQHQNKQTALKILKAKLYQLEMEKKRREIQEIQGELKDISWGNQIRSYIFHPYTMVKDHRTGVETANVDAVMDGDIDMFIEAELVYFARRSS.

Residue Gln-249 is modified to N5-methylglutamine.

This sequence belongs to the prokaryotic/mitochondrial release factor family. Post-translationally, methylated by PrmC. Methylation increases the termination efficiency of RF2.

The protein localises to the cytoplasm. Peptide chain release factor 2 directs the termination of translation in response to the peptide chain termination codons UGA and UAA. The sequence is that of Peptide chain release factor 2 from Thermotoga sp. (strain RQ2).